The primary structure comprises 353 residues: Peptide-N(4)-(N-acetyl-beta-glucosaminyl)asparagine amidase (353 aa).

Residues Cys125, Cys128, and Cys159 each contribute to the Zn(2+) site. The active-site Nucleophile is the Cys185. Residues His212 and Asp229 contribute to the active site. Glu232 lines the substrate pocket. Residues 316 to 353 (SLEKTKPSKDTSTTTLTGTKGRESGSTAWKQQRGEDGS) are disordered. Positions 325-334 (DTSTTTLTGT) are enriched in low complexity.

It belongs to the transglutaminase-like superfamily. PNGase family. Zn(2+) is required as a cofactor.

It localises to the cytoplasm. It catalyses the reaction Hydrolysis of an N(4)-(acetyl-beta-D-glucosaminyl)asparagine residue in which the glucosamine residue may be further glycosylated, to yield a (substituted) N-acetyl-beta-D-glucosaminylamine and a peptide containing an aspartate residue.. Its function is as follows. Specifically deglycosylates the denatured form of N-linked glycoproteins in the cytoplasm and assists their proteasome-mediated degradation. Cleaves the beta-aspartyl-glucosamine (GlcNAc) of the glycan and the amide side chain of Asn, converting Asn to Asp. Prefers proteins containing high-mannose over those bearing complex type oligosaccharides. Can recognize misfolded proteins in the endoplasmic reticulum that are exported to the cytosol to be destroyed and deglycosylate them, while it has no activity toward native proteins. Deglycosylation is a prerequisite for subsequent proteasome-mediated degradation of some, but not all, misfolded glycoproteins. The sequence is that of Peptide-N(4)-(N-acetyl-beta-glucosaminyl)asparagine amidase (PNG1) from Kluyveromyces lactis (strain ATCC 8585 / CBS 2359 / DSM 70799 / NBRC 1267 / NRRL Y-1140 / WM37) (Yeast).